We begin with the raw amino-acid sequence, 440 residues long: Tryptophan synthase beta chain (440 aa).

N6-(pyridoxal phosphate)lysine is present on Lys110.

This sequence belongs to the TrpB family. Tetramer of two alpha and two beta chains. Pyridoxal 5'-phosphate serves as cofactor.

The enzyme catalyses (1S,2R)-1-C-(indol-3-yl)glycerol 3-phosphate + L-serine = D-glyceraldehyde 3-phosphate + L-tryptophan + H2O. It participates in amino-acid biosynthesis; L-tryptophan biosynthesis; L-tryptophan from chorismate: step 5/5. Its function is as follows. The beta subunit is responsible for the synthesis of L-tryptophan from indole and L-serine. The sequence is that of Tryptophan synthase beta chain from Thermococcus gammatolerans (strain DSM 15229 / JCM 11827 / EJ3).